The chain runs to 201 residues: Small ribosomal subunit protein uS4c (201 aa).

The tract at residues 23-42 is disordered; sequence SKKPRAGSNLRNQLRPGKKS. The S4 RNA-binding domain occupies 89-151; sequence MRLDNILFRL…QKSKSLVQNY (63 aa).

Belongs to the universal ribosomal protein uS4 family. Part of the 30S ribosomal subunit. Contacts protein S5. The interaction surface between S4 and S5 is involved in control of translational fidelity.

Its subcellular location is the plastid. It localises to the chloroplast. Its function is as follows. One of the primary rRNA binding proteins, it binds directly to 16S rRNA where it nucleates assembly of the body of the 30S subunit. In terms of biological role, with S5 and S12 plays an important role in translational accuracy. In Morus indica (Mulberry), this protein is Small ribosomal subunit protein uS4c (rps4).